The primary structure comprises 1152 residues: MRKFNIRKVLDGLTAGSSSASQQQQQQQHPPGNREPEIQETLQSEHFQLCKTVRHGFPYQPSALAFDPVQKILAVGTQTGALRLFGRPGVECYCQHDSGAAVIQLQFLINEGALVSALADDTLHLWNLRQKRPAVLHSLKFCRERVTFCHLPFQSKWLYVGTERGNIHIVNVESFTLSGYVIMWNKAIELSSKSHPGPVVHISDNPMDEGKLLIGFESGTVVLWDLKSKKADYRYTYDEAIHSVAWHHEGKQFICSHSDGTLTIWNVRSPTKPVQTITPHGKQLKDGKKPEPCKPILKVEFKTTRSGEPFIILSGGLSYDTVGRRPCLTVMHGKSTAVLEMDYSIVDFLTLCETPYPNDFQEPYAVVVLLEKDLVLIDLAQNGYPIFENPYPLSIHESPVTCCEYFADCPVDLIPALYSVGARQKRQGYSKKEWPINGGNWGLGAQSYPEIIITGHADGSIKFWDASAITLQVLYKLKTSKVFEKSRNKDDRQNTDIVDEDPYAIQIISWCPESRMLCIAGVSAHVIIYRFSKQEVVTEVIPMLEVRLLYEINDVETPEGEQPPPLSTPVGSSTSQPIPPQSHPSTSSSSSDGLRDNVPCLKVKNSPLKQSPGYQTELVIQLVWVGGEPPQQITSLALNSSYGLVVFGNSNGIAMVDYLQKAVLLNLSTIELYGSNDPYRREPRSPRKSRQPSGAGLCDITEGTVVPEDRCKSPTSGSSSPHNSDDEQKVNNFIEKVKTQSRKFSKMVASDLAKMSRKLSLPTDLKPDLDVKDNSFSRSRSSSVTSIDKESREAISALHFCETFTRKADSSPSPCLWVGTTVGTAFVITLNLPLGPEQRLLQPVIVSPSGTILRLKGAILRMAFLDAAGCLMPPAYEPWTEHNVPEEKDEKEKLKKRRPVSVSPSSSQEISENQYAVICSEKQAKVISLPTQNCAYKQNITETSFVLRGDIVALSNSVCLACFCANGHIMTFSLPSLRPLLDVYYLPLTNMRIARTFCFANSGQALYLVSPTEIQRLTYSQETCENLQEMLGELFTPVETPEAPNRGFFKGLFGGGAQSLDREELFGESSSGKASRSLAQHIPGPGGIEGVKGAASGVVGELARARLALDERGQKLSDLEERTAAMMSSADSFSKHAHEMMLKYKDKKWYQF.

Residues 14-35 (TAGSSSASQQQQQQQHPPGNRE) are disordered. Low complexity predominate over residues 17-28 (SSSASQQQQQQQ). 10 WD repeats span residues 62 to 95 (SALA…CYCQ), 102 to 141 (VIQL…SLKF), 146 to 182 (VTFC…GYVI), 201 to 235 (HISD…DYRY), 241 to 273 (IHSV…PTKP), 295 to 337 (PILK…KSTA), 345 to 379 (IVDF…LIDL), 401 to 478 (TCCE…YKLK), 506 to 620 (QIIS…ELVI), and 634 to 696 (TSLA…SGAG). Disordered regions lie at residues 557–596 (TPEG…GLRD) and 675–731 (SNDP…QKVN). The residue at position 693 (serine 693) is a Phosphoserine. The span at 713-722 (SPTSGSSSPH) shows a compositional bias: low complexity. At serine 724 the chain carries Phosphoserine; by PKA. At serine 760 the chain carries Phosphoserine. Threonine 763 carries the post-translational modification Phosphothreonine. Serine 783 bears the Phosphoserine mark. The residue at position 785 (threonine 785) is a Phosphothreonine. Serine 786 bears the Phosphoserine mark. WD repeat units lie at residues 795–852 (ISAL…SGTI), 861–935 (RMAF…QNCA), 940–984 (ITET…LDVY), and 998–1021 (CFAN…TYSQ). The span at 879-893 (WTEHNVPEEKDEKEK) shows a compositional bias: basic and acidic residues. Residues 879–907 (WTEHNVPEEKDEKEKLKKRRPVSVSPSSS) are disordered. Residues serine 901 and serine 903 each carry the phosphoserine modification. Phosphothreonine is present on threonine 1040. Serine 1059 and serine 1132 each carry phosphoserine. Residues 1087–1147 (GIEGVKGAAS…HEMMLKYKDK (61 aa)) enclose the v-SNARE coiled-coil homology domain.

This sequence belongs to the WD repeat L(2)GL family. In terms of assembly, part of a complex that contains STXBP5, STX4A and SNAP23. Interacts with STX1A and STX4A via its v-SNARE homology domain. Part of a complex that contains STX1, STXBP5, SNAP25 and SYT1. Phosphorylation by PKA reduces interaction with STX1A and enhances synaptic neurotransmitter release. In terms of tissue distribution, isoform 1 is detected in heart, brain, lung, liver, skeletal muscle, kidney and testis. Isoform 2 is detected in brain and in testis. Isoform 3 is detected in testis.

It localises to the cytoplasm. The protein localises to the cell membrane. It is found in the cytoplasmic vesicle membrane. Its subcellular location is the synapse. The protein resides in the cytoplasmic vesicle. It localises to the secretory vesicle. The protein localises to the synaptic vesicle. Inhibits translocation of GLUT4 from intracellular vesicles to the plasma membrane. Plays a regulatory role in calcium-dependent exocytosis and neurotransmitter release. Inhibits membrane fusion between transport vesicles and the plasma membrane. May modulate the assembly of trans-SNARE complexes between transport vesicles and the plasma membrane. Competes with STXBP1 for STX1 binding. This Rattus norvegicus (Rat) protein is Syntaxin-binding protein 5 (Stxbp5).